A 25-amino-acid polypeptide reads, in one-letter code: Panurgine R (25 aa).

Cystine bridges form between Cys8–Cys23 and Cys11–Cys19.

The protein localises to the target cell membrane. It localises to the secreted. Antimicrobial peptide active against Gram-positive bacteria M.luteus (MIC=0.8 uM) and B.subtilis (MIC=1.5 uM). Less active against Gram-negative bacteria E.coli (MIC=32.5 uM) and yeast C.albicans (MIC=18.7 uM). Not active against S.aureus and P.aeruginosa. Has no hemolytic activity against human erythrocytes. Probably acts by disrupting membranes of target cells. This Panurgus calcaratus (Solitary bee) protein is Panurgine R.